The following is a 452-amino-acid chain: tRNA modification GTPase MnmE (452 aa).

Positions 21, 78, and 118 each coordinate (6S)-5-formyl-5,6,7,8-tetrahydrofolate. Residues 214–375 (GMKVVIAGRP…LREHLKKSMG (162 aa)) form the TrmE-type G domain. Asn224 is a K(+) binding site. Residues 224 to 229 (NAGKSS), 243 to 249 (TNIAGTT), and 268 to 271 (DTAG) each bind GTP. Ser228 is a Mg(2+) binding site. K(+)-binding residues include Thr243, Ile245, and Thr248. Thr249 provides a ligand contact to Mg(2+). Lys452 contributes to the (6S)-5-formyl-5,6,7,8-tetrahydrofolate binding site.

This sequence belongs to the TRAFAC class TrmE-Era-EngA-EngB-Septin-like GTPase superfamily. TrmE GTPase family. As to quaternary structure, homodimer. Heterotetramer of two MnmE and two MnmG subunits. K(+) serves as cofactor.

The protein localises to the cytoplasm. Its function is as follows. Exhibits a very high intrinsic GTPase hydrolysis rate. Involved in the addition of a carboxymethylaminomethyl (cmnm) group at the wobble position (U34) of certain tRNAs, forming tRNA-cmnm(5)s(2)U34. This chain is tRNA modification GTPase MnmE, found in Actinobacillus pleuropneumoniae serotype 5b (strain L20).